Here is a 445-residue protein sequence, read N- to C-terminus: tRNA-2-methylthio-N(6)-dimethylallyladenosine synthase (445 aa).

The 115-residue stretch at 7-121 (KTFYIETFGC…LPEMLVQLEA (115 aa)) folds into the MTTase N-terminal domain. [4Fe-4S] cluster contacts are provided by Cys-16, Cys-52, Cys-84, Cys-158, Cys-162, and Cys-165. The region spanning 144-374 (RDNPHRAYLT…QEKQRAIQIR (231 aa)) is the Radical SAM core domain. One can recognise a TRAM domain in the interval 377-443 (AEMIGSIQEV…PNSLVGESAA (67 aa)).

Belongs to the methylthiotransferase family. MiaB subfamily. Monomer. [4Fe-4S] cluster serves as cofactor.

The protein resides in the cytoplasm. It carries out the reaction N(6)-dimethylallyladenosine(37) in tRNA + (sulfur carrier)-SH + AH2 + 2 S-adenosyl-L-methionine = 2-methylsulfanyl-N(6)-dimethylallyladenosine(37) in tRNA + (sulfur carrier)-H + 5'-deoxyadenosine + L-methionine + A + S-adenosyl-L-homocysteine + 2 H(+). Its function is as follows. Catalyzes the methylthiolation of N6-(dimethylallyl)adenosine (i(6)A), leading to the formation of 2-methylthio-N6-(dimethylallyl)adenosine (ms(2)i(6)A) at position 37 in tRNAs that read codons beginning with uridine. The chain is tRNA-2-methylthio-N(6)-dimethylallyladenosine synthase from Solibacter usitatus (strain Ellin6076).